Reading from the N-terminus, the 288-residue chain is Thymidylate synthase (288 aa).

DUMP is bound by residues R21 and R150–R151. C170 (nucleophile) is an active-site residue. Residues R191–D194, N202, and H232–Y234 contribute to the dUMP site. Residue D194 participates in (6R)-5,10-methylene-5,6,7,8-tetrahydrofolate binding. (6R)-5,10-methylene-5,6,7,8-tetrahydrofolate is bound at residue A287.

Belongs to the thymidylate synthase family. Bacterial-type ThyA subfamily. In terms of assembly, homodimer.

Its subcellular location is the cytoplasm. It catalyses the reaction dUMP + (6R)-5,10-methylene-5,6,7,8-tetrahydrofolate = 7,8-dihydrofolate + dTMP. It functions in the pathway pyrimidine metabolism; dTTP biosynthesis. Its function is as follows. Catalyzes the reductive methylation of 2'-deoxyuridine-5'-monophosphate (dUMP) to 2'-deoxythymidine-5'-monophosphate (dTMP) while utilizing 5,10-methylenetetrahydrofolate (mTHF) as the methyl donor and reductant in the reaction, yielding dihydrofolate (DHF) as a by-product. This enzymatic reaction provides an intracellular de novo source of dTMP, an essential precursor for DNA biosynthesis. In Mesoplasma florum (strain ATCC 33453 / NBRC 100688 / NCTC 11704 / L1) (Acholeplasma florum), this protein is Thymidylate synthase.